A 142-amino-acid chain; its full sequence is Hemoglobin subunit alpha (142 aa).

The 141-residue stretch at 2 to 142 folds into the Globin domain; it reads VLSAADKTNV…VSTVLTSKYR (141 aa). S4 carries the post-translational modification Phosphoserine. K8 carries the N6-succinyllysine modification. T9 bears the Phosphothreonine mark. K12 bears the N6-succinyllysine mark. K17 bears the N6-acetyllysine; alternate mark. K17 is modified (N6-succinyllysine; alternate). The residue at position 25 (Y25) is a Phosphotyrosine. An N6-succinyllysine modification is found at K41. S50 carries the post-translational modification Phosphoserine. An O2-binding site is contributed by H59. Residue H88 coordinates heme b. S103 carries the phosphoserine modification. Position 109 is a phosphothreonine (T109). Phosphoserine is present on residues S125 and S132. Residues T135 and T138 each carry the phosphothreonine modification. At S139 the chain carries Phosphoserine.

The protein belongs to the globin family. Heterotetramer of two alpha chains and two beta chains. As to expression, red blood cells.

Its function is as follows. Involved in oxygen transport from the lung to the various peripheral tissues. Hemopressin acts as an antagonist peptide of the cannabinoid receptor CNR1. Hemopressin-binding efficiently blocks cannabinoid receptor CNR1 and subsequent signaling. This is Hemoglobin subunit alpha (HBA) from Equus caballus (Horse).